A 144-amino-acid chain; its full sequence is Catabolic 3-dehydroquinase (144 aa).

The active-site Proton acceptor is Y24. The substrate site is built by N76, H82, and D89. The active-site Proton donor is the H102. Substrate contacts are provided by residues 103 to 104 (IT) and R113.

Belongs to the type-II 3-dehydroquinase family. In terms of assembly, homododecamer. Adopts a ring-like structure, composed of an arrangement of two hexameric rings stacked on top of one another.

The catalysed reaction is 3-dehydroquinate = 3-dehydroshikimate + H2O. It participates in aromatic compound metabolism; 3,4-dihydroxybenzoate biosynthesis; 3,4-dihydroxybenzoate from 3-dehydroquinate: step 1/2. In terms of biological role, is involved in the catabolism of quinate. Allows the utilization of quinate as carbon source via the beta-ketoadipate pathway. The sequence is that of Catabolic 3-dehydroquinase from Debaryomyces hansenii (strain ATCC 36239 / CBS 767 / BCRC 21394 / JCM 1990 / NBRC 0083 / IGC 2968) (Yeast).